The sequence spans 354 residues: Protein-glutamate methylesterase/protein-glutamine glutaminase 2 (354 aa).

Positions 5–122 (RVLIVDDSAL…SLKIKEVAEE (118 aa)) constitute a Response regulatory domain. A 4-aspartylphosphate modification is found at Asp56. The CheB-type methylesterase domain maps to 159–354 (PDTSFKKLIL…IADRIVELVR (196 aa)). Catalysis depends on residues Ser172, His199, and Asp298.

Belongs to the CheB family. Phosphorylated by CheA. Phosphorylation of the N-terminal regulatory domain activates the methylesterase activity.

It is found in the cytoplasm. The catalysed reaction is [protein]-L-glutamate 5-O-methyl ester + H2O = L-glutamyl-[protein] + methanol + H(+). It catalyses the reaction L-glutaminyl-[protein] + H2O = L-glutamyl-[protein] + NH4(+). Its function is as follows. Involved in chemotaxis. Part of a chemotaxis signal transduction system that modulates chemotaxis in response to various stimuli. Catalyzes the demethylation of specific methylglutamate residues introduced into the chemoreceptors (methyl-accepting chemotaxis proteins or MCP) by CheR. Also mediates the irreversible deamidation of specific glutamine residues to glutamic acid. This Carboxydothermus hydrogenoformans (strain ATCC BAA-161 / DSM 6008 / Z-2901) protein is Protein-glutamate methylesterase/protein-glutamine glutaminase 2.